We begin with the raw amino-acid sequence, 346 residues long: Small ribosomal subunit biogenesis GTPase RsgA 1 (346 aa).

A CP-type G domain is found at 93 to 248; that stretch reads EEQLIAANFD…IIDTPGMREF (156 aa). GTP contacts are provided by residues 138–141 and 190–198; these read TKAD and GSSGVGKSS. Residues cysteine 271, cysteine 276, histidine 278, and cysteine 284 each contribute to the Zn(2+) site.

Belongs to the TRAFAC class YlqF/YawG GTPase family. RsgA subfamily. In terms of assembly, monomer. Associates with 30S ribosomal subunit, binds 16S rRNA. The cofactor is Zn(2+).

The protein localises to the cytoplasm. Its function is as follows. One of several proteins that assist in the late maturation steps of the functional core of the 30S ribosomal subunit. Helps release RbfA from mature subunits. May play a role in the assembly of ribosomal proteins into the subunit. Circularly permuted GTPase that catalyzes slow GTP hydrolysis, GTPase activity is stimulated by the 30S ribosomal subunit. In Listeria innocua serovar 6a (strain ATCC BAA-680 / CLIP 11262), this protein is Small ribosomal subunit biogenesis GTPase RsgA 1.